The primary structure comprises 112 residues: ATP synthase epsilon chain (112 aa).

It belongs to the ATPase epsilon chain family. As to quaternary structure, F-type ATPases have 2 components, CF(1) - the catalytic core - and CF(0) - the membrane proton channel. CF(1) has five subunits: alpha(3), beta(3), gamma(1), delta(1), epsilon(1). CF(0) has three main subunits: a, b and c.

The protein localises to the cell inner membrane. Produces ATP from ADP in the presence of a proton gradient across the membrane. The chain is ATP synthase epsilon chain from Rickettsia felis (strain ATCC VR-1525 / URRWXCal2) (Rickettsia azadi).